Reading from the N-terminus, the 409-residue chain is Multidrug resistance protein MdtG (409 aa).

A run of 10 helical transmembrane segments spans residues 16–36 (LIVAWLGCFLTGAAFSLVMPF), 58–78 (IVFSITFLFSAIASPFWGGLA), 92–112 (LGMGIVMVLMGLAQNIWQFLI), 115–135 (ALLGLLGGFVPNANALIATQV), 146–166 (TLSTGGVSGALLGPMAGGLLA), 173–193 (PVFFITASVLILCFFVTLFCI), 224–244 (LFVTTLIIQVATGSIAPILTL), 256–276 (VAFISGMIASVPGVAALLLSA), 291–311 (ILITALIFSVLLLIPMSYVQT), and 379–399 (AVFLVTAGVVLFNAVYSWNSL).

Belongs to the major facilitator superfamily. DHA1 family. MdtG (TC 2.A.1.2.20) subfamily.

It is found in the cell inner membrane. Functionally, confers resistance to fosfomycin and deoxycholate. In Escherichia coli O9:H4 (strain HS), this protein is Multidrug resistance protein MdtG.